A 408-amino-acid polypeptide reads, in one-letter code: MTSKGPEEEHPSVTLFRQYLRIRTVQPKPDYGAAVAFFEETARQLGLGCQKVEVAPGYVVTVLTWPGTNPTLSSILLNSHTDVVPVFKEHWSHDPFEAFKDSEGYIYARGAQDMKCVSIQYLEAVRRLKVEGHRFPRTIHMTFVPDEEVGGHQGMELFVQRPEFHALRAGFALDEGIANPTDAFTVFYSERSPWWVRVTSTGRPGHASRFMEDTAAEKLHKVVNSILAFREKEWQRLQSNPHLKEGSVTSVNLTKLEGGVAYNVIPATMSASFDFRVAPDVDFKAFEEQLQSWCQAAGEGVTLEFAQKWMHPQVTPTDDSNPWWAAFSRVCKDMNLTLEPEIMPAATDNRYIRAVGVPALGFSPMNRTPVLLHDHDERLHEAVFLRGVDIYTRLLPALASVPALPSDS.

A Zn(2+)-binding site is contributed by histidine 80. Aspartate 82 is an active-site residue. Aspartate 113 is a Zn(2+) binding site. Residue glutamate 147 is the Proton acceptor of the active site. Glutamate 148, glutamate 175, and histidine 373 together coordinate Zn(2+).

Belongs to the peptidase M20A family. Homodimer. Interacts with SPHK1. Requires Zn(2+) as cofactor. Expression is highest in kidney, strong in brain and weaker in placenta and spleen.

The protein localises to the cytoplasm. The enzyme catalyses an N-acyl-L-amino acid + H2O = an L-alpha-amino acid + a carboxylate. It catalyses the reaction N-acetyl-L-methionine + H2O = L-methionine + acetate. The catalysed reaction is N-acetyl-L-glutamine + H2O = L-glutamine + acetate. In terms of biological role, catalyzes the hydrolysis of N-acetylated amino acids to acetate and free amino acids. In Homo sapiens (Human), this protein is Aminoacylase-1 (ACY1).